A 92-amino-acid chain; its full sequence is MTRSLKKNPFVANHLLRKIEKLNTKAEKEIIVTWSRASTIIPTMIGHTIAIHNGKEHLPIYITDRMVGHKLGEFAPTMNFRGHAKNDNRSRR.

It belongs to the universal ribosomal protein uS19 family.

It localises to the plastid. The protein localises to the chloroplast. Protein S19 forms a complex with S13 that binds strongly to the 16S ribosomal RNA. The polypeptide is Small ribosomal subunit protein uS19c (Platanus occidentalis (Sycamore)).